Consider the following 868-residue polypeptide: Leucine--tRNA ligase (868 aa).

The 'HIGH' region signature appears at proline 42–histidine 52. The short motif at lysine 627 to serine 631 is the 'KMSKS' region element. Lysine 630 is an ATP binding site.

The protein belongs to the class-I aminoacyl-tRNA synthetase family.

The protein localises to the cytoplasm. It carries out the reaction tRNA(Leu) + L-leucine + ATP = L-leucyl-tRNA(Leu) + AMP + diphosphate. The protein is Leucine--tRNA ligase of Pseudomonas syringae pv. tomato (strain ATCC BAA-871 / DC3000).